An 87-amino-acid polypeptide reads, in one-letter code: Small ribosomal subunit protein bS20 (87 aa).

The span at Met-1–Arg-12 shows a compositional bias: basic residues. The interval Met-1–Asn-21 is disordered.

It belongs to the bacterial ribosomal protein bS20 family.

Its function is as follows. Binds directly to 16S ribosomal RNA. This Syntrophotalea carbinolica (strain DSM 2380 / NBRC 103641 / GraBd1) (Pelobacter carbinolicus) protein is Small ribosomal subunit protein bS20.